Reading from the N-terminus, the 201-residue chain is Keratin-associated protein 4-12 (201 aa).

30 consecutive repeat copies span residues 5 to 9 (CCGSV), 20 to 24 (CCRPS), 25 to 29 (CCQTT), 30 to 34 (CCRTT), 35 to 39 (CCRPS), 40 to 44 (CCVSS), 45 to 49 (CCRPQ), 50 to 54 (CCQSV), 55 to 59 (CCQPT), 60 to 64 (CCRPS), 65 to 69 (CCQTT), 70 to 74 (CCRTT), 75 to 79 (CCRPS), 80 to 84 (CCVSS), 85 to 89 (CCRPQ), 90 to 94 (CCQSV), 95 to 99 (CCQPT), 100 to 104 (CCRPS), 105 to 109 (CCQTT), 110 to 114 (CCRTT), 115 to 119 (CCRPS), 120 to 124 (CCVSS), 125 to 129 (CCRPQ), 130 to 134 (CCQSV), 135 to 139 (CCQPT), 140 to 144 (CCRPS), 145 to 149 (CCISS), 155 to 159 (CCESS), 160 to 164 (CCRPC), and 165 to 169 (CCLRP). A 31 X 5 AA repeats of C-C-[GRQVIL]-[SPTR]-[VSTQPC] region spans residues 5 to 169 (CCGSVCSDQG…CCRPCCCLRP (165 aa)).

Belongs to the KRTAP type 4 family. As to quaternary structure, interacts with hair keratins. As to expression, expressed in the hair follicles.

In the hair cortex, hair keratin intermediate filaments are embedded in an interfilamentous matrix, consisting of hair keratin-associated proteins (KRTAP), which are essential for the formation of a rigid and resistant hair shaft through their extensive disulfide bond cross-linking with abundant cysteine residues of hair keratins. The matrix proteins include the high-sulfur and high-glycine-tyrosine keratins. This is Keratin-associated protein 4-12 (KRTAP4-12) from Homo sapiens (Human).